Reading from the N-terminus, the 912-residue chain is Vomeronasal type-2 receptor 1 (912 aa).

A signal peptide spans 1–21; that stretch reads MASRQISLALGFLAFLWAVLG. Topologically, residues 22–623 are extracellular; that stretch reads AQNKTEEVQC…LAYGEALGFT (602 aa). Residues N24, N38, N299, and N386 are each glycosylated (N-linked (GlcNAc...) asparagine). A helical transmembrane segment spans residues 624–644; it reads LVILSIFGALVVLAVTVVYVI. The Cytoplasmic segment spans residues 645 to 657; it reads HRHTPLVKANDRE. Residues 658-678 traverse the membrane as a helical segment; sequence LSFLIQMSLVITVLSSLLFIG. Residues 679–691 lie on the Extracellular side of the membrane; it reads KPCNWSCMARQIT. The chain crosses the membrane as a helical span at residues 692–712; that stretch reads LALGFCLCLSSILGKTISLFF. The Cytoplasmic portion of the chain corresponds to 713 to 732; it reads AYRISVSKTRLISMHPIFRK. Residues 733–753 form a helical membrane-spanning segment; it reads LIVLVCVVGEIGVCAAYLVLE. At 754 to 778 the chain is on the extracellular side; sequence PPRMFKNIEIQNVKIIFECNEGSVE. Residues 779–799 form a helical membrane-spanning segment; that stretch reads FLCSIFGFDVLRALLCFLTTF. Over 800–812 the chain is Cytoplasmic; it reads VARQLPDNYYEGK. A helical transmembrane segment spans residues 813–833; sequence CITFGMLVFFIVWISFVPAYL. At 834–840 the chain is on the extracellular side; the sequence is STKGKFK. The helical transmembrane segment at 841–861 threads the bilayer; the sequence is VAVEIFAILASSYGLLGCLFL. Residues 862–912 lie on the Cytoplasmic side of the membrane; that stretch reads PKCFIILLRPKRNTDETVGGRVPTVDRSIQLTSASVSSELNSTTVSTVLDE.

The protein belongs to the G-protein coupled receptor 3 family. As to expression, expressed at the sensory surface of the vomeronasal organ.

The protein resides in the cell membrane. Its function is as follows. Putative pheromone receptor. This chain is Vomeronasal type-2 receptor 1 (Vmn2r1), found in Mus musculus (Mouse).